We begin with the raw amino-acid sequence, 381 residues long: MATNLRKTHPMMKIINNLVIDLPSPSNISAWWNFGSLLATCLALQIITGIFLAMHYSPDISMAFSSIAHITRDVQYGWLIRNMHANGASLFFMCIYLHIGRGIYYGSYLYKETWNTGIILLLLVMATAFVGYVLPWGQMSFWGATVITNLLSAIPYIGNTLVQWIWGGFSVDNATLTRFFTFHFLLPFAITGLTAVHLLFLHETGSNNPTGLNSNTDKIPFHPYFSYKDLLGLILMLTFLLTLTLFSPYLLGDPDNFTPANPLSTPPHIKPEWYFLFAYAILRSIPNKLGGVLALLFSILILFLMPTLHTSKQRTASFRPLTQILFWSLVADLLVLTWIGGQPVEDPFIIIGQVASTFYFLILLLLMPAAGMIENKMLNLK.

4 helical membrane passes run 34–54 (FGSL…FLAM), 78–99 (WLIR…YLHI), 114–134 (WNTG…GYVL), and 179–199 (FFTF…VHLL). The heme b site is built by histidine 84 and histidine 98. Residues histidine 183 and histidine 197 each contribute to the heme b site. Position 202 (histidine 202) interacts with a ubiquinone. The next 4 helical transmembrane spans lie at 227-247 (YKDL…TLFS), 289-309 (LGGV…PTLH), 321-341 (LTQI…WIGG), and 348-368 (FIII…LLMP).

Belongs to the cytochrome b family. As to quaternary structure, the cytochrome bc1 complex contains 3 respiratory subunits (MT-CYB, CYC1 and UQCRFS1), 2 core proteins (UQCRC1 and UQCRC2) and probably 6 low-molecular weight proteins. It depends on heme b as a cofactor.

It localises to the mitochondrion inner membrane. Component of the ubiquinol-cytochrome c reductase complex (complex III or cytochrome b-c1 complex) that is part of the mitochondrial respiratory chain. The b-c1 complex mediates electron transfer from ubiquinol to cytochrome c. Contributes to the generation of a proton gradient across the mitochondrial membrane that is then used for ATP synthesis. This Chelonia mydas (Green sea-turtle) protein is Cytochrome b (MT-CYB).